The primary structure comprises 502 residues: MFRQAKWDEPLIFELSREGRVGYTLPKPIEDLEVEIPEKIRRKSKLDLPELSEPEIVKHYTRLSEMNYGVDSGIYPLGSCTMKYNPKINEEMAAHPGVAYIHPYQDERTVQGALKIMWELEQWLKEITGMDRFTLQPAAGANGEFTGVSIIRTYHIDNGEPQRDEMLVPDSAHGTNPASAAMAGFKVIEIPSNENGTVDLEALENAVGERTAGLMLTNPNTLGIFEDEILEIAKIVHKAGGLLYYDGANLNAVLGKVRPGDMGFDIVHLNLHKTFSTPHGGGGPGSGPVGVKDFLKDYLPVPLVGYDEENDRYYLDYNVPKSIGKVKELYGNFAVMVRALVYLKVMGRDGLKNASEIAVLNANYLTRKLLGTRGYELPGKKLRKHETVFSAEPMKKETGVTAMDVAKRLLDFGMHAPTVYFPLIVHEALMIEPTETVSKEELDAYVEALKRISDEAYTNPEVVKSAPHNTAVRRVDDVMAVKKPVISWRMYLELKEKGEINY.

K273 carries the N6-(pyridoxal phosphate)lysine modification.

Belongs to the GcvP family. C-terminal subunit subfamily. The glycine cleavage system is composed of four proteins: P, T, L and H. In this organism, the P 'protein' is a heterodimer of two subunits. Pyridoxal 5'-phosphate serves as cofactor.

The enzyme catalyses N(6)-[(R)-lipoyl]-L-lysyl-[glycine-cleavage complex H protein] + glycine + H(+) = N(6)-[(R)-S(8)-aminomethyldihydrolipoyl]-L-lysyl-[glycine-cleavage complex H protein] + CO2. Functionally, the glycine cleavage system catalyzes the degradation of glycine. The P protein binds the alpha-amino group of glycine through its pyridoxal phosphate cofactor; CO(2) is released and the remaining methylamine moiety is then transferred to the lipoamide cofactor of the H protein. The polypeptide is Probable glycine dehydrogenase (decarboxylating) subunit 2 (Thermococcus gammatolerans (strain DSM 15229 / JCM 11827 / EJ3)).